A 96-amino-acid polypeptide reads, in one-letter code: Large ribosomal subunit protein bL27 (96 aa).

A propeptide spanning residues methionine 1 to phenylalanine 9 is cleaved from the precursor.

Belongs to the bacterial ribosomal protein bL27 family. In terms of processing, the N-terminus is cleaved by ribosomal processing cysteine protease Prp.

The polypeptide is Large ribosomal subunit protein bL27 (Anoxybacillus flavithermus (strain DSM 21510 / WK1)).